Here is a 325-residue protein sequence, read N- to C-terminus: Plasminogen (325 aa).

Kringle domains follow at residues 80–146 and 159–217; these read ACVK…VPSC and LTPA…VLSV. Intrachain disulfides connect Cys81/Cys146, Cys102/Cys135, Cys124/Cys141, and Cys188/Cys212.

Belongs to the peptidase S1 family. Plasminogen subfamily.

It is found in the secreted. It catalyses the reaction Preferential cleavage: Lys-|-Xaa &gt; Arg-|-Xaa, higher selectivity than trypsin. Converts fibrin into soluble products.. Plasmin dissolves the fibrin of blood clots and acts as a proteolytic factor in a variety of other processes including embryonic development, tissue remodeling, tumor invasion, and inflammation. This chain is Plasminogen, found in Petromyzon marinus (Sea lamprey).